The sequence spans 420 residues: Serine--tRNA ligase (420 aa).

227 to 229 (TSE) lines the L-serine pocket. ATP is bound by residues 258–260 (RRE) and Val-274. Glu-281 is a binding site for L-serine. 345-348 (ELTS) is a binding site for ATP. Thr-380 serves as a coordination point for L-serine.

The protein belongs to the class-II aminoacyl-tRNA synthetase family. Type-1 seryl-tRNA synthetase subfamily. As to quaternary structure, homodimer. The tRNA molecule binds across the dimer.

Its subcellular location is the cytoplasm. The enzyme catalyses tRNA(Ser) + L-serine + ATP = L-seryl-tRNA(Ser) + AMP + diphosphate + H(+). The catalysed reaction is tRNA(Sec) + L-serine + ATP = L-seryl-tRNA(Sec) + AMP + diphosphate + H(+). The protein operates within aminoacyl-tRNA biosynthesis; selenocysteinyl-tRNA(Sec) biosynthesis; L-seryl-tRNA(Sec) from L-serine and tRNA(Sec): step 1/1. Its function is as follows. Catalyzes the attachment of serine to tRNA(Ser). Is also able to aminoacylate tRNA(Sec) with serine, to form the misacylated tRNA L-seryl-tRNA(Sec), which will be further converted into selenocysteinyl-tRNA(Sec). The polypeptide is Serine--tRNA ligase (Nocardia farcinica (strain IFM 10152)).